A 416-amino-acid polypeptide reads, in one-letter code: Serine hydroxymethyltransferase (416 aa).

(6S)-5,6,7,8-tetrahydrofolate is bound by residues L118 and 122 to 124; that span reads GHL. The residue at position 226 (K226) is an N6-(pyridoxal phosphate)lysine. E242 is a binding site for (6S)-5,6,7,8-tetrahydrofolate.

It belongs to the SHMT family. As to quaternary structure, homodimer. It depends on pyridoxal 5'-phosphate as a cofactor.

The protein localises to the cytoplasm. The enzyme catalyses (6R)-5,10-methylene-5,6,7,8-tetrahydrofolate + glycine + H2O = (6S)-5,6,7,8-tetrahydrofolate + L-serine. Its pathway is one-carbon metabolism; tetrahydrofolate interconversion. It participates in amino-acid biosynthesis; glycine biosynthesis; glycine from L-serine: step 1/1. Functionally, catalyzes the reversible interconversion of serine and glycine with tetrahydrofolate (THF) serving as the one-carbon carrier. This reaction serves as the major source of one-carbon groups required for the biosynthesis of purines, thymidylate, methionine, and other important biomolecules. Also exhibits THF-independent aldolase activity toward beta-hydroxyamino acids, producing glycine and aldehydes, via a retro-aldol mechanism. The polypeptide is Serine hydroxymethyltransferase (Helicobacter pylori (strain J99 / ATCC 700824) (Campylobacter pylori J99)).